Consider the following 159-residue polypeptide: Nutritionally-regulated adipose and cardiac-enriched protein homolog (159 aa).

Positions 1 to 67 (MKTAVHALSP…GDEPRRTTRH (67 aa)) are disordered. Composition is skewed to basic and acidic residues over residues 12–25 (SRPETQHQTRKNEE) and 50–63 (SPQERCGRGDEPRR). The helical transmembrane segment at 107 to 124 (LTACILLALALGMCCGQA) threads the bilayer.

The protein localises to the cell membrane. This Bos taurus (Bovine) protein is Nutritionally-regulated adipose and cardiac-enriched protein homolog (NRAC).